The sequence spans 146 residues: SSDHCGPLQRLKVKQQWAKAYGVGHERVELGIALWKSMFAQDNDARDLFKRVHGEDVHSPAFEAHMARVFNGLDRVISSLTDEPVLNAQLEHLRQQHIKLGITGHMFNLMRTGLAYVLPAQLGRCFDKEAWAACWDEVIYPGIKHD.

The region spanning 4–146 is the Globin domain; sequence HCGPLQRLKV…EVIYPGIKHD (143 aa). A disulfide bridge connects residues Cys5 and Cys134. His97 contacts heme b.

The protein belongs to the globin family. As to quaternary structure, disulfide bonded trimer of chains IIA, IIB, and IIC.

This chain is Extracellular globin-2A, found in Tylorrhynchus heterochetus (Japanese palolo worm).